We begin with the raw amino-acid sequence, 227 residues long: MMLHIPGVLTNAQVAQCRELLDAAHWVDGNATSGAQSALAKRNRQLPEGSPVARAVGDAIQDALARHALFFSAALPLKVFPPLFNRYAGGETFGTHVDNAIRLLRGTDFRVRSDLSATLFLEEPDAYDGGELCVEDTYGVHRAKLPAGDLVLYPASSLHHVTPVTRGERVASFFWIQSMVRDDGDRTLLFQLDTQIQALSAEKGAKDPMVISLTGIYHNLLRKWADA.

Positions 78–178 (KVFPPLFNRY…RVASFFWIQS (101 aa)) constitute a Fe2OG dioxygenase domain. Residues histidine 96, aspartate 98, and histidine 159 each contribute to the Fe cation site. Arginine 169 contacts 2-oxoglutarate.

Requires Fe(2+) as cofactor. L-ascorbate serves as cofactor.

The sequence is that of PKHD-type hydroxylase Bamb_4192 from Burkholderia ambifaria (strain ATCC BAA-244 / DSM 16087 / CCUG 44356 / LMG 19182 / AMMD) (Burkholderia cepacia (strain AMMD)).